Consider the following 442-residue polypeptide: Probable glycine dehydrogenase (decarboxylating) subunit 1 (442 aa).

The protein belongs to the GcvP family. N-terminal subunit subfamily. As to quaternary structure, the glycine cleavage system is composed of four proteins: P, T, L and H. In this organism, the P 'protein' is a heterodimer of two subunits.

It carries out the reaction N(6)-[(R)-lipoyl]-L-lysyl-[glycine-cleavage complex H protein] + glycine + H(+) = N(6)-[(R)-S(8)-aminomethyldihydrolipoyl]-L-lysyl-[glycine-cleavage complex H protein] + CO2. Functionally, the glycine cleavage system catalyzes the degradation of glycine. The P protein binds the alpha-amino group of glycine through its pyridoxal phosphate cofactor; CO(2) is released and the remaining methylamine moiety is then transferred to the lipoamide cofactor of the H protein. This Geotalea daltonii (strain DSM 22248 / JCM 15807 / FRC-32) (Geobacter daltonii) protein is Probable glycine dehydrogenase (decarboxylating) subunit 1.